A 476-amino-acid chain; its full sequence is H2.0-like homeobox protein (476 aa).

Disordered regions lie at residues 121 to 170 (HLPQ…SSKD), 328 to 401 (WRHS…HQTT), and 413 to 476 (TASS…LAGL). Over residues 158 to 168 (HHSGSAPAPSS) the composition is skewed to low complexity. A DNA-binding region (homeobox) is located at residues 273-332 (RSWSRAVFSNLQRKGLEKRFEIQKYVTKPDRKQLAAMLGLTDAQVKVWFQNRRMKWRHSK). 2 stretches are compositionally biased toward basic and acidic residues: residues 331–346 (SKEAQAQKDKDKEAGE) and 355–368 (EGEREERSPSRSEG). The segment covering 369 to 379 (EAESESSDSES) has biased composition (acidic residues). A compositionally biased stretch (basic and acidic residues) spans 386–397 (DTERTEGTERSL). Over residues 413–446 (TASSSASGSSFSFSSSSSLGSSNGSAGSASSLGS) the composition is skewed to low complexity. A compositionally biased stretch (polar residues) spans 455-464 (HQPSVTSGPQ).

Belongs to the H2.0 homeobox family.

It localises to the nucleus. In terms of biological role, transcription factor required for TBX21/T-bet-dependent maturation of Th1 cells as well as maintenance of Th1-specific gene expression. Involved in embryogenesis and hematopoiesis. The chain is H2.0-like homeobox protein (Hlx) from Rattus norvegicus (Rat).